The primary structure comprises 505 residues: Maturase K (505 aa).

Belongs to the intron maturase 2 family. MatK subfamily.

The protein resides in the plastid. The protein localises to the chloroplast. Functionally, usually encoded in the trnK tRNA gene intron. Probably assists in splicing its own and other chloroplast group II introns. The chain is Maturase K from Spinacia oleracea (Spinach).